The chain runs to 193 residues: MSDTTELVDLAVIFPDLEIELKYACADNITGKAIYQQARCLLHKDAITALAKSISIAQLSGLQLVIYDAYRPQQAQAMLWQACPDPQYVVDVTVGSNHSRGTAIDLTLRDEHGNILDMGAGFDEMHERSHAYHPSVPPAAQRNRLLLNAIMTGGGFVGISSEWWHFELPQAASYPLLADQFSCFISPGTQHVS.

Zn(2+)-binding residues include H98 and D105. E162 (proton donor/acceptor) is an active-site residue. H165 contributes to the Zn(2+) binding site.

The protein belongs to the peptidase M15D family. Zn(2+) serves as cofactor.

It is found in the cytoplasm. The enzyme catalyses D-alanyl-D-alanine + H2O = 2 D-alanine. Its function is as follows. Catalyzes hydrolysis of the D-alanyl-D-alanine dipeptide. May have a role in cell-wall turnover. The chain is D-alanyl-D-alanine dipeptidase from Escherichia coli (strain K12).